The chain runs to 195 residues: Kiwa protein KwaA (195 aa).

Transmembrane regions (helical) follow at residues 10 to 30, 46 to 66, and 117 to 137; these read GLYI…TAKI, LVLT…SIYF, and IAYL…DKYY.

It is found in the cell inner membrane. In terms of biological role, component of antiviral defense system Kiwa, composed of KwaA and KwaB. Expression of Kiwa in E.coli (strain MG1655) confers resistance to phages lambda and SECphi18. The protein is Kiwa protein KwaA of Escherichia coli O55:H7 (strain RM12579 / EPEC).